A 235-amino-acid chain; its full sequence is Octanoyltransferase (235 aa).

Residues 28-203 (GRAEETLLLL…PFAGLPADAL (176 aa)) enclose the BPL/LPL catalytic domain. Substrate contacts are provided by residues 66 to 73 (RGGDVTWH), 133 to 135 (SIG), and 146 to 148 (GFA). The Acyl-thioester intermediate role is filled by cysteine 164. Residues 202-235 (ALPEQPRDAVQPSSCDDVHAPSTTSRRPPCPLTV) are disordered.

Belongs to the LipB family.

Its subcellular location is the cytoplasm. The catalysed reaction is octanoyl-[ACP] + L-lysyl-[protein] = N(6)-octanoyl-L-lysyl-[protein] + holo-[ACP] + H(+). It functions in the pathway protein modification; protein lipoylation via endogenous pathway; protein N(6)-(lipoyl)lysine from octanoyl-[acyl-carrier-protein]: step 1/2. Its function is as follows. Catalyzes the transfer of endogenously produced octanoic acid from octanoyl-acyl-carrier-protein onto the lipoyl domains of lipoate-dependent enzymes. Lipoyl-ACP can also act as a substrate although octanoyl-ACP is likely to be the physiological substrate. The protein is Octanoyltransferase of Geobacter sulfurreducens (strain ATCC 51573 / DSM 12127 / PCA).